The chain runs to 244 residues: Agamous-like MADS-box protein MADS3 (244 aa).

Residues Met-1 to Gly-61 form the MADS-box domain. Positions Thr-85–Ser-175 constitute a K-box domain. Positions Gln-180 to Asp-206 are disordered. Over residues Gly-181–Pro-204 the composition is skewed to polar residues.

Expressed in flowers and seeds.

The protein resides in the nucleus. Functionally, probable transcription factor involved in flower development. This is Agamous-like MADS-box protein MADS3 from Vitis vinifera (Grape).